We begin with the raw amino-acid sequence, 862 residues long: Active breakpoint cluster region-related protein (862 aa).

The tract at residues 29-84 (YDAEGNEEHKNSREGSETMPYIDESPTMSPQLSARSQDSVDGVSPTPTEVLLPGGE) is disordered. Residues 34–44 (NEEHKNSREGS) are compositionally biased toward basic and acidic residues. The segment covering 54-67 (PTMSPQLSARSQDS) has biased composition (polar residues). The region spanning 93–286 (MRKLVLSGVL…QNFLSSINED (194 aa)) is the DH domain. Residues 303–462 (QLVKDGFLVE…WREAIQKLQK (160 aa)) form the PH domain. The C2 domain occupies 488–616 (VHNVPIISHK…QSKNWHDDVI (129 aa)). The 199-residue stretch at 650-848 (VKISVVTKRE…YYLQHPPISF (199 aa)) folds into the Rho-GAP domain.

The protein resides in the cell projection. It localises to the dendritic spine. It is found in the axon. The protein localises to the synapse. Its function is as follows. Protein with a unique structure having two opposing regulatory activities toward small GTP-binding proteins. The C-terminus is a GTPase-activating protein domain which stimulates GTP hydrolysis by RAC1, RAC2 and CDC42. Accelerates the intrinsic rate of GTP hydrolysis of RAC1 or CDC42, leading to down-regulation of the active GTP-bound form. The central Dbl homology (DH) domain functions as guanine nucleotide exchange factor (GEF) that modulates the GTPases CDC42, RHOA and RAC1. Promotes the conversion of CDC42, RHOA and RAC1 from the GDP-bound to the GTP-bound form. The protein is Active breakpoint cluster region-related protein (abr) of Xenopus laevis (African clawed frog).